Reading from the N-terminus, the 188-residue chain is Viral FLICE protein (188 aa).

2 DED domains span residues A2 to H74 and P93 to T169.

In terms of assembly, interacts with host RIPK1, TRAF2, MAP3K14, IKBKB, and IKBKG. Interacts with host CADM1; this interaction is essential for chronic NF-kappa-B activation.

Its function is as follows. Plays a role in the modulation of host signaling pathways by acting as an activator of both the classic and the alternative NF-kappa-B pathways. Thereby, initiates an important range of cellular processes to promote cell survival, proliferation and protection from apoptosis. In Human herpesvirus 8 type P (isolate GK18) (HHV-8), this protein is Viral FLICE protein (ORF71).